A 373-amino-acid polypeptide reads, in one-letter code: Arabinonate dehydratase (373 aa).

Mg(2+)-binding residues include D199, E225, and E251.

It belongs to the mandelate racemase/muconate lactonizing enzyme family. Homooctamer. Mg(2+) is required as a cofactor.

It carries out the reaction D-arabinonate = 2-dehydro-3-deoxy-D-arabinonate + H2O. Inhibited by substrate levels above 8 mM. In terms of biological role, catalyzes the dehydration of D-arabinonate to 2-keto-3-deoxy-D-arabinonate. Participates in a pentose oxidation pathway that converts D-arabinonate to 2-oxoglutarate. This Saccharolobus solfataricus (strain ATCC 35092 / DSM 1617 / JCM 11322 / P2) (Sulfolobus solfataricus) protein is Arabinonate dehydratase.